The primary structure comprises 346 residues: Carbamoyl phosphate synthase small chain (346 aa).

A CPSase region spans residues Met-1–Glu-160. Residues Ser-39, Gly-209, and Gly-211 each contribute to the L-glutamine site. One can recognise a Glutamine amidotransferase type-1 domain in the interval Cys-164–His-346. The active-site Nucleophile is Cys-237. Residues Leu-238, Gln-241, Asn-280, Gly-282, and Tyr-283 each contribute to the L-glutamine site. Catalysis depends on residues His-320 and Glu-322.

Belongs to the CarA family. In terms of assembly, composed of two chains; the small (or glutamine) chain promotes the hydrolysis of glutamine to ammonia, which is used by the large (or ammonia) chain to synthesize carbamoyl phosphate. Tetramer of heterodimers (alpha,beta)4.

It catalyses the reaction hydrogencarbonate + L-glutamine + 2 ATP + H2O = carbamoyl phosphate + L-glutamate + 2 ADP + phosphate + 2 H(+). The catalysed reaction is L-glutamine + H2O = L-glutamate + NH4(+). The protein operates within amino-acid biosynthesis; L-arginine biosynthesis; carbamoyl phosphate from bicarbonate: step 1/1. It functions in the pathway pyrimidine metabolism; UMP biosynthesis via de novo pathway; (S)-dihydroorotate from bicarbonate: step 1/3. Small subunit of the glutamine-dependent carbamoyl phosphate synthetase (CPSase). CPSase catalyzes the formation of carbamoyl phosphate from the ammonia moiety of glutamine, carbonate, and phosphate donated by ATP, constituting the first step of 2 biosynthetic pathways, one leading to arginine and/or urea and the other to pyrimidine nucleotides. The small subunit (glutamine amidotransferase) binds and cleaves glutamine to supply the large subunit with the substrate ammonia. This is Carbamoyl phosphate synthase small chain from Pyrobaculum aerophilum (strain ATCC 51768 / DSM 7523 / JCM 9630 / CIP 104966 / NBRC 100827 / IM2).